We begin with the raw amino-acid sequence, 84 residues long: Putative antitoxin VapB37 (84 aa).

Its function is as follows. Probable antitoxin component of a type II toxin-antitoxin (TA) system. Its putative cognate toxin is VapC37. In Mycobacterium tuberculosis (strain CDC 1551 / Oshkosh), this protein is Putative antitoxin VapB37 (vapB37).